Consider the following 172-residue polypeptide: Protein/nucleic acid deglycase 2 (172 aa).

One can recognise a PfpI endopeptidase domain in the interval 3–171 (KKIAVLITDE…FNREALRLLG (169 aa)). The active-site Nucleophile is the cysteine 104.

It belongs to the peptidase C56 family. Exists in monomeric, trimeric, and hexameric forms.

The protein resides in the cytoplasm. It catalyses the reaction N(omega)-(1-hydroxy-2-oxopropyl)-L-arginyl-[protein] + H2O = lactate + L-arginyl-[protein] + H(+). It carries out the reaction N(6)-(1-hydroxy-2-oxopropyl)-L-lysyl-[protein] + H2O = lactate + L-lysyl-[protein] + H(+). The catalysed reaction is S-(1-hydroxy-2-oxopropyl)-L-cysteinyl-[protein] + H2O = lactate + L-cysteinyl-[protein] + H(+). The enzyme catalyses N(omega)-(1-hydroxy-2-oxoethyl)-L-arginyl-[protein] + H2O = L-arginyl-[protein] + glycolate + H(+). It catalyses the reaction N(6)-(1-hydroxy-2-oxoethyl)-L-lysyl-[protein] + H2O = glycolate + L-lysyl-[protein] + H(+). It carries out the reaction S-(1-hydroxy-2-oxoethyl)-L-cysteinyl-[protein] + H2O = glycolate + L-cysteinyl-[protein] + H(+). The catalysed reaction is N(2)-(1-hydroxy-2-oxopropyl)-dGTP + H2O = lactate + dGTP + H(+). The enzyme catalyses N(2)-(1-hydroxy-2-oxopropyl)-GTP + H2O = lactate + GTP + H(+). It catalyses the reaction N(2)-(1-hydroxy-2-oxopropyl)-GDP + H2O = lactate + GDP + H(+). It carries out the reaction N(2)-(1-hydroxy-2-oxopropyl)-GMP + H2O = lactate + GMP + H(+). The catalysed reaction is N(2)-(1-hydroxy-2-oxoethyl)-dGTP + H2O = dGTP + glycolate + H(+). The enzyme catalyses N(2)-(1-hydroxy-2-oxoethyl)-GTP + H2O = glycolate + GTP + H(+). It catalyses the reaction N(2)-(1-hydroxy-2-oxoethyl)-GDP + H2O = glycolate + GDP + H(+). It carries out the reaction N(2)-(1-hydroxy-2-oxoethyl)-GMP + H2O = glycolate + GMP + H(+). The catalysed reaction is an N(2)-(1-hydroxy-2-oxopropyl)-guanosine in RNA + H2O = a guanosine in RNA + lactate + H(+). The enzyme catalyses an N(2)-(1-hydroxy-2-oxopropyl)-2'-deoxyguanosine in DNA + H2O = a 2'-deoxyguanosine in DNA + lactate + H(+). It catalyses the reaction an N(2)-(1-hydroxy-2-oxoethyl)-guanosine in RNA + H2O = a guanosine in RNA + glycolate + H(+). It carries out the reaction an N(2)-(1-hydroxy-2-oxoethyl)-2'-deoxyguanosine in DNA + H2O = a 2'-deoxyguanosine in DNA + glycolate + H(+). With respect to regulation, glyoxalase activity is inhibited by zinc ions at pH 7.0. Its function is as follows. Protein and nucleotide deglycase that catalyzes the deglycation of the Maillard adducts formed between amino groups of proteins or nucleotides and reactive carbonyl groups of glyoxals. Thus, functions as a protein deglycase that repairs methylglyoxal- and glyoxal-glycated proteins, and releases repaired proteins and lactate or glycolate, respectively. Deglycates cysteine, arginine and lysine residues in proteins, and thus reactivates these proteins by reversing glycation by glyoxals. Is able to repair glycated serum albumin, collagen, glyceraldehyde-3-phosphate dehydrogenase, and fructose biphosphate aldolase. Acts on early glycation intermediates (hemithioacetals and aminocarbinols), preventing the formation of advanced glycation endproducts (AGE) that cause irreversible damage. Also functions as a nucleotide deglycase able to repair glycated guanine in the free nucleotide pool (GTP, GDP, GMP, dGTP) and in DNA and RNA. Is thus involved in a major nucleotide repair system named guanine glycation repair (GG repair), dedicated to reversing methylglyoxal and glyoxal damage via nucleotide sanitization and direct nucleic acid repair. In vitro, prevents acrylamide formation in asparagine/glyoxal and asparagine/sugar mixtures at 55 degrees Celsius, likely by degrading asparagine/glyoxal Maillard adducts formed at high temperatures. Also displays an apparent glyoxalase activity that in fact reflects its deglycase activity. Is a general stress protein; is required for the protection of bacterial cells against many environmental stresses, including oxidative, thermal, osmotic, UV, and pH stresses. And plays an important role in protection against electrophile/carbonyl stress. The sequence is that of Protein/nucleic acid deglycase 2 (yhbO) from Escherichia coli (strain K12).